Reading from the N-terminus, the 316-residue chain is 4-hydroxy-3-methylbut-2-enyl diphosphate reductase (316 aa).

Cysteine 12 is a binding site for [4Fe-4S] cluster. Residues histidine 41 and histidine 74 each contribute to the (2E)-4-hydroxy-3-methylbut-2-enyl diphosphate site. Dimethylallyl diphosphate-binding residues include histidine 41 and histidine 74. Positions 41 and 74 each coordinate isopentenyl diphosphate. Cysteine 96 is a [4Fe-4S] cluster binding site. Histidine 124 contributes to the (2E)-4-hydroxy-3-methylbut-2-enyl diphosphate binding site. Position 124 (histidine 124) interacts with dimethylallyl diphosphate. Position 124 (histidine 124) interacts with isopentenyl diphosphate. The Proton donor role is filled by glutamate 126. Residue threonine 167 participates in (2E)-4-hydroxy-3-methylbut-2-enyl diphosphate binding. Position 197 (cysteine 197) interacts with [4Fe-4S] cluster. Serine 225, serine 226, asparagine 227, and serine 269 together coordinate (2E)-4-hydroxy-3-methylbut-2-enyl diphosphate. The dimethylallyl diphosphate site is built by serine 225, serine 226, asparagine 227, and serine 269. Residues serine 225, serine 226, asparagine 227, and serine 269 each contribute to the isopentenyl diphosphate site.

It belongs to the IspH family. In terms of assembly, homodimer. Requires [4Fe-4S] cluster as cofactor.

It carries out the reaction isopentenyl diphosphate + 2 oxidized [2Fe-2S]-[ferredoxin] + H2O = (2E)-4-hydroxy-3-methylbut-2-enyl diphosphate + 2 reduced [2Fe-2S]-[ferredoxin] + 2 H(+). The catalysed reaction is dimethylallyl diphosphate + 2 oxidized [2Fe-2S]-[ferredoxin] + H2O = (2E)-4-hydroxy-3-methylbut-2-enyl diphosphate + 2 reduced [2Fe-2S]-[ferredoxin] + 2 H(+). The protein operates within isoprenoid biosynthesis; dimethylallyl diphosphate biosynthesis; dimethylallyl diphosphate from (2E)-4-hydroxy-3-methylbutenyl diphosphate: step 1/1. Its pathway is isoprenoid biosynthesis; isopentenyl diphosphate biosynthesis via DXP pathway; isopentenyl diphosphate from 1-deoxy-D-xylulose 5-phosphate: step 6/6. Functionally, catalyzes the conversion of 1-hydroxy-2-methyl-2-(E)-butenyl 4-diphosphate (HMBPP) into a mixture of isopentenyl diphosphate (IPP) and dimethylallyl diphosphate (DMAPP). Acts in the terminal step of the DOXP/MEP pathway for isoprenoid precursor biosynthesis. The polypeptide is 4-hydroxy-3-methylbut-2-enyl diphosphate reductase (Salmonella paratyphi B (strain ATCC BAA-1250 / SPB7)).